Here is a 499-residue protein sequence, read N- to C-terminus: Glycerol kinase (499 aa).

Thr13 lines the ADP pocket. 3 residues coordinate ATP: Thr13, Thr14, and Ser15. Thr13 is a binding site for sn-glycerol 3-phosphate. Arg17 serves as a coordination point for ADP. The sn-glycerol 3-phosphate site is built by Arg83, Glu84, Tyr135, and Asp245. The glycerol site is built by Arg83, Glu84, Tyr135, Asp245, and Gln246. ADP contacts are provided by Thr267 and Gly310. The ATP site is built by Thr267, Gly310, Gln314, and Ala411. Residues Ala411 and Asn415 each coordinate ADP.

This sequence belongs to the FGGY kinase family.

The enzyme catalyses glycerol + ATP = sn-glycerol 3-phosphate + ADP + H(+). The protein operates within polyol metabolism; glycerol degradation via glycerol kinase pathway; sn-glycerol 3-phosphate from glycerol: step 1/1. With respect to regulation, inhibited by fructose 1,6-bisphosphate (FBP). Its function is as follows. Key enzyme in the regulation of glycerol uptake and metabolism. Catalyzes the phosphorylation of glycerol to yield sn-glycerol 3-phosphate. The chain is Glycerol kinase from Xylella fastidiosa (strain M12).